Here is a 282-residue protein sequence, read N- to C-terminus: 4-diphosphocytidyl-2-C-methyl-D-erythritol kinase (282 aa).

Residue K12 is part of the active site. 95 to 105 (PMGGGIGGGSS) is a binding site for ATP. The active site involves D137.

The protein belongs to the GHMP kinase family. IspE subfamily.

It carries out the reaction 4-CDP-2-C-methyl-D-erythritol + ATP = 4-CDP-2-C-methyl-D-erythritol 2-phosphate + ADP + H(+). It participates in isoprenoid biosynthesis; isopentenyl diphosphate biosynthesis via DXP pathway; isopentenyl diphosphate from 1-deoxy-D-xylulose 5-phosphate: step 3/6. Its function is as follows. Catalyzes the phosphorylation of the position 2 hydroxy group of 4-diphosphocytidyl-2C-methyl-D-erythritol. The polypeptide is 4-diphosphocytidyl-2-C-methyl-D-erythritol kinase (Pseudomonas aeruginosa (strain LESB58)).